A 176-amino-acid chain; its full sequence is Inner membrane assembly complex subunit 17 (176 aa).

The N-terminal 28 residues, 1–28 (MLRVLPTSFKSISTRSAFRACQLSPLTV), are a transit peptide targeting the mitochondrion. At 29 to 98 (YCPLKSSQGT…MSQEVSLKRF (70 aa)) the chain is on the mitochondrial matrix side. The chain crosses the membrane as a helical span at residues 99-121 (VRPLWVFFLMSSTVYLILHYVWW). Residues 122 to 176 (KLEVVEKEKELQSHVESLEMELDQTLKSQNQNVSSSQNNGNNKTNDKPWYRKWFF) are Mitochondrial intermembrane-facing. Residues 123–151 (LEVVEKEKELQSHVESLEMELDQTLKSQN) adopt a coiled-coil conformation. Low complexity predominate over residues 149–163 (SQNQNVSSSQNNGNN). A disordered region spans residues 149–168 (SQNQNVSSSQNNGNNKTNDK).

The protein belongs to the INA17 family. As to quaternary structure, component of the inner membrane assembly (INA) complex, composed of INA17 and INA22. Interacts with a subset of F(1)F(0)-ATP synthase subunits of the F(1)-domain and the peripheral stalk.

It is found in the mitochondrion inner membrane. Component of the INA complex (INAC) that promotes the biogenesis of mitochondrial F(1)F(0)-ATP synthase. INAC facilitates the assembly of the peripheral stalk and promotes the assembly of the catalytic F(1)-domain with the membrane-embedded F(0)-domain. This Zygosaccharomyces rouxii (strain ATCC 2623 / CBS 732 / NBRC 1130 / NCYC 568 / NRRL Y-229) protein is Inner membrane assembly complex subunit 17.